The chain runs to 305 residues: tRNA dimethylallyltransferase (305 aa).

8 to 15 (GPTASGKT) serves as a coordination point for ATP. 10-15 (TASGKT) is a binding site for substrate. Positions 33–36 (DSQQ) are interaction with substrate tRNA.

The protein belongs to the IPP transferase family. In terms of assembly, monomer. Mg(2+) serves as cofactor.

The enzyme catalyses adenosine(37) in tRNA + dimethylallyl diphosphate = N(6)-dimethylallyladenosine(37) in tRNA + diphosphate. Functionally, catalyzes the transfer of a dimethylallyl group onto the adenine at position 37 in tRNAs that read codons beginning with uridine, leading to the formation of N6-(dimethylallyl)adenosine (i(6)A). This is tRNA dimethylallyltransferase from Anaeromyxobacter dehalogenans (strain 2CP-1 / ATCC BAA-258).